Here is a 1580-residue protein sequence, read N- to C-terminus: Transcriptional activator GLI3 (1580 aa).

Met-1 is subject to N-acetylmethionine. Polar residues-rich tracts occupy residues 1–10 (MEAQSHSSTT) and 58–78 (ITMQPQNVQGLSKVSEEPSTS). Residues 1–79 (MEAQSHSSTT…KVSEEPSTSS (79 aa)) are disordered. Arg-175 is subject to Omega-N-methylarginine. The segment at 368-475 (QSLGSAFGHS…DKDESKQEPE (108 aa)) is disordered. Positions 401–427 (NPVQVSSGPSESSQNKPTSESAVSSTG) are enriched in polar residues. Glycyl lysine isopeptide (Lys-Gly) (interchain with G-Cter in SUMO2) cross-links involve residues Lys-438 and Lys-462. Over residues 461–474 (VKEEGDKDESKQEP) the composition is skewed to basic and acidic residues. C2H2-type zinc fingers lie at residues 480–505 (TNCHWEGCAREFDTQEQLVHHINNDH), 513–540 (FVCRWLDCSREQKPFKAQYMLVVHMRRH), 546–570 (HKCTFEGCTKAYSRLENLKTHLRSH), 576–601 (YVCEHEGCNKAFSNASDRAKHQNRTH), and 607–632 (YVCKIPGCTKRYTDPSSLRKHVKTVH). Positions 620–728 (DPSSLRKHVK…PISNYSNSGL (109 aa)) are disordered. Residues 632–648 (HGPEAHVTKKQRGDIHP) show a composition bias toward basic and acidic residues. Ser-664 bears the Phosphoserine mark. Basic and acidic residues predominate over residues 684–699 (SKREECLQVKTVKAEK). Over residues 703–726 (SQPSPGGQSSCSSQQSPISNYSNS) the composition is skewed to low complexity. The tract at residues 745 to 845 (DETPIMDSTI…VDVTMLNMLN (101 aa)) is mediates interaction with DZIP1. Residue Lys-773 forms a Glycyl lysine isopeptide (Lys-Gly) (interchain with G-Cter in ubiquitin) linkage. Residue Lys-779 forms a Glycyl lysine isopeptide (Lys-Gly) (interchain with G-Cter in SUMO2); alternate linkage. Lys-779 is covalently cross-linked (Glycyl lysine isopeptide (Lys-Gly) (interchain with G-Cter in ubiquitin); alternate). Residues Lys-784 and Lys-800 each participate in a glycyl lysine isopeptide (Lys-Gly) (interchain with G-Cter in ubiquitin) cross-link. Ser-849, Ser-865, Ser-877, and Ser-907 each carry phosphoserine; by PKA. Over residues 863-882 (RSSGISPCFSSRRSSEASQA) the composition is skewed to low complexity. The interval 863–918 (RSSGISPCFSSRRSSEASQAEGRPQNVSVADSYDPISTDASRRSSEASQSDGLPSL) is disordered. Residues 908 to 918 (EASQSDGLPSL) show a composition bias toward polar residues. 2 positions are modified to phosphoserine; by PKA: Ser-980 and Ser-1006. Residues 981-1042 (DGGAHGYGRR…PAMATSAEKR (62 aa)) are disordered.

The protein belongs to the GLI C2H2-type zinc-finger protein family. As to quaternary structure, the full-length GLI3 form (GLI3FL) interacts with SUFU and this interaction regulates the formation of either repressor or activator forms of GLI3. Its association with SUFU is regulated by Hh signaling and dissociation of the SUFU-GLI3 interaction requires the presence of the ciliary motor KIF3A. Interacts with KIF7. The activator form of GLI3 (GLI3A) but not the repressor form (GLI3R) can interact with TRPS1. The phosphorylated form interacts with BTRC. Interacts with ZIC1. Interacts with ZIC3 (via C2H2-type domains 3, 4 and 5); the interaction enhances its transcriptional activity. Interacts with WRD11; the interaction associates EMX1 with GLI3. Interacts with DZIP1; retains GLI3 within the cytoplasm. Phosphorylated on multiple sites by protein kinase A (PKA) and phosphorylation by PKA primes further phosphorylation by CK1 and GSK3. Phosphorylated by DYRK2 (in vitro). Phosphorylation is essential for its proteolytic processing. Post-translationally, transcriptional repressor GLI3R, a C-terminally truncated form, is generated from the full-length GLI3 protein (GLI3FL/GLI3-190) through proteolytic processing. This process requires PKA-primed phosphorylation of GLI3, ubiquitination of GLI3 and the presence of BTRC. GLI3FL is complexed with SUFU in the cytoplasm and is maintained in a neutral state. Without the Hh signal, the SUFU-GLI3 complex is recruited to cilia, leading to the efficient processing of GLI3FL into GLI3R. GLI3R formation leads to its dissociation from SUFU, allowing it to translocate into the nucleus, and repress Hh target genes. When Hh signaling is initiated, SUFU dissociates from GLI3FL and this has two consequences. First, GLI3R production is halted. Second, free GLI3FL translocates to the nucleus, where it is phosphorylated, destabilized, and converted to a transcriptional activator (GLI3A). Phosphorylated in vitro by ULK3. In terms of tissue distribution, is expressed in a wide variety of normal adult tissues, including lung, colon, spleen, placenta, testis, and myometrium.

Its subcellular location is the nucleus. It localises to the cytoplasm. The protein localises to the cell projection. The protein resides in the cilium. Its function is as follows. Has a dual function as a transcriptional activator and a repressor of the sonic hedgehog (Shh) pathway, and plays a role in limb development. The full-length GLI3 form (GLI3FL) after phosphorylation and nuclear translocation, acts as an activator (GLI3A) while GLI3R, its C-terminally truncated form, acts as a repressor. A proper balance between the GLI3 activator and the repressor GLI3R, rather than the repressor gradient itself or the activator/repressor ratio gradient, specifies limb digit number and identity. In concert with TRPS1, plays a role in regulating the size of the zone of distal chondrocytes, in restricting the zone of PTHLH expression in distal cells and in activating chondrocyte proliferation. Binds to the minimal GLI-consensus sequence 5'-GGGTGGTC-3'. The protein is Transcriptional activator GLI3 (GLI3) of Homo sapiens (Human).